Reading from the N-terminus, the 38-residue chain is Large ribosomal subunit protein bL36 (38 aa).

It belongs to the bacterial ribosomal protein bL36 family.

This chain is Large ribosomal subunit protein bL36, found in Buchnera aphidicola subsp. Cinara cedri (strain Cc).